Reading from the N-terminus, the 319-residue chain is Bidirectional sugar transporter SWEET15 (319 aa).

Residues 1-10 (MAFMSMERST) lie on the Extracellular side of the membrane. A helical transmembrane segment spans residues 11–31 (WAFTFGILGNLISLMVFLSPL). A MtN3/slv 1 domain is found at 13 to 99 (FTFGILGNLI…AMYLAYAPKS (87 aa)). The Cytoplasmic portion of the chain corresponds to 32-50 (PTFYRVYRKKSTEGFQSTP). The helical transmembrane segment at 51–71 (YVVTLFSCMLWMYYAFVKSGA) threads the bilayer. Position 72 (Glu-72) is a topological domain, extracellular. Residues 73 to 93 (LLVTINGVGCVIETVYLAMYL) traverse the membrane as a helical segment. Residues 94–106 (AYAPKSARMLTAK) lie on the Cytoplasmic side of the membrane. A helical transmembrane segment spans residues 107–127 (MLLGLNIGLFGVIALVTLLLS). Topologically, residues 128-134 (RGELRVH) are extracellular. The chain crosses the membrane as a helical span at residues 135-155 (VLGWICVAVSLSVFAAPLSII). In terms of domain architecture, MtN3/slv 2 spans 135-219 (VLGWICVAVS…ALYMAYRSKK (85 aa)). The Cytoplasmic portion of the chain corresponds to 156-167 (RLVIRTKSVEFM). Residues 168–188 (PFSLSFFLVLSAVIWFLYGLL) traverse the membrane as a helical segment. The Extracellular portion of the chain corresponds to 189 to 191 (KKD). Residues 192–212 (VFVALPNVLGFVFGVAQMALY) traverse the membrane as a helical segment. Over 213–319 (MAYRSKKPLV…KPDMAIVVEV (107 aa)) the chain is Cytoplasmic.

It belongs to the SWEET sugar transporter family. Forms homooligomers and/or heterooligomers.

The protein localises to the cell membrane. Functionally, mediates both low-affinity uptake and efflux of sugar across the plasma membrane. Its function is as follows. Confers blight susceptibility. Confers TAL effector-mediated susceptibility to Xanthomonas oryzae pv. oryzae. This is Bidirectional sugar transporter SWEET15 (SWEET15) from Oryza sativa subsp. japonica (Rice).